The chain runs to 500 residues: MLNVNFVNEESSTNQGLVVFIDEQLKLDSNLIGLDQQHHGLISKTIQNKLQFTGKYGQIKVIPSVIKSGEVRYLIIAGLGNEEKLTEAKIEELGGKILQHATGCKISTIGLKLTNRISRFTSQTFASLVASGAFLASYRFDKYRTTLKEAEKFAVESIEIFTDNSTETAKLFEIKKLIAEAVFFTRDISNEPSNIKTPQVYAERIVDRLEPLGVDVDVIGEREMKNLGMGALLGVGQGSQNESKLVVMEYKGGSKDAPTIALVGKGVIFDTGGISLKPSSDMHLMRYDMGGSAAVVGTIIAVAGQKLSVNIVGVVGLVENMPSGNAQRPGDVVTTMSGQTAEVLNTDAEGRLVLADAVWYAQEKFKPKCVIDVATLTGAITIALGNTYAGCFSNNDELADKLIKVGEEVNEKLWRMPLHDEYDAMINSDIADMANIGNVPRAAGSCIAAHFIKRFIKDGVDWAHLDIAGVANSNKASALGPKGAVGYGVRLLEQFIKEYT.

The Mn(2+) site is built by K265 and D270. K277 is an active-site residue. D288, D347, and E349 together coordinate Mn(2+). R351 is a catalytic residue.

This sequence belongs to the peptidase M17 family. Mn(2+) serves as cofactor.

It is found in the cytoplasm. The enzyme catalyses Release of an N-terminal amino acid, Xaa-|-Yaa-, in which Xaa is preferably Leu, but may be other amino acids including Pro although not Arg or Lys, and Yaa may be Pro. Amino acid amides and methyl esters are also readily hydrolyzed, but rates on arylamides are exceedingly low.. The catalysed reaction is Release of an N-terminal amino acid, preferentially leucine, but not glutamic or aspartic acids.. Functionally, presumably involved in the processing and regular turnover of intracellular proteins. Catalyzes the removal of unsubstituted N-terminal amino acids from various peptides. The chain is Probable cytosol aminopeptidase from Rickettsia peacockii (strain Rustic).